A 381-amino-acid chain; its full sequence is Cytochrome b (381 aa).

Helical transmembrane passes span 34–54 (FGSL…FLAM), 78–99 (WLIR…YLHI), 114–134 (WNIG…GYVL), and 179–199 (FFAF…IHLL). Heme b-binding residues include His84 and His98. Heme b is bound by residues His183 and His197. His202 contacts a ubiquinone. Helical transmembrane passes span 227–247 (YKDL…ALFM), 289–309 (LGGV…PLLH), 321–341 (MTQI…WIGG), and 348–368 (FIMV…IIMP).

It belongs to the cytochrome b family. As to quaternary structure, the cytochrome bc1 complex contains 3 respiratory subunits (MT-CYB, CYC1 and UQCRFS1), 2 core proteins (UQCRC1 and UQCRC2) and probably 6 low-molecular weight proteins. Heme b serves as cofactor.

Its subcellular location is the mitochondrion inner membrane. In terms of biological role, component of the ubiquinol-cytochrome c reductase complex (complex III or cytochrome b-c1 complex) that is part of the mitochondrial respiratory chain. The b-c1 complex mediates electron transfer from ubiquinol to cytochrome c. Contributes to the generation of a proton gradient across the mitochondrial membrane that is then used for ATP synthesis. This Carcharhinus plumbeus (Sandbar shark) protein is Cytochrome b (mt-cyb).